The sequence spans 310 residues: Porphobilinogen deaminase (310 aa).

The residue at position 240 (cysteine 240) is an S-(dipyrrolylmethanemethyl)cysteine.

Belongs to the HMBS family. As to quaternary structure, monomer. Requires dipyrromethane as cofactor.

The catalysed reaction is 4 porphobilinogen + H2O = hydroxymethylbilane + 4 NH4(+). Its pathway is porphyrin-containing compound metabolism; protoporphyrin-IX biosynthesis; coproporphyrinogen-III from 5-aminolevulinate: step 2/4. In terms of biological role, tetrapolymerization of the monopyrrole PBG into the hydroxymethylbilane pre-uroporphyrinogen in several discrete steps. In Desulfosudis oleivorans (strain DSM 6200 / JCM 39069 / Hxd3) (Desulfococcus oleovorans), this protein is Porphobilinogen deaminase.